The sequence spans 637 residues: Dihydrolipoyllysine-residue acetyltransferase component of pyruvate dehydrogenase complex, mitochondrial (637 aa).

A mitochondrion-targeting transit peptide spans 1–85; that stretch reads MWRVCVRRAQ…LLGSPGRRSY (85 aa). The interval 80–100 is disordered; it reads PGRRSYSLPPHQKVPLPSLSP. Residues 90 to 166 form the Lipoyl-binding 1 domain; the sequence is HQKVPLPSLS…PIGSIICITV (77 aa). Ser99 carries the phosphoserine modification. Lys131 is modified (N6-lipoyllysine). Disordered regions lie at residues 189–219 and 307–340; these read QAAA…PPHM and LKPQ…PAGP. Over residues 201-211 the composition is skewed to low complexity; the sequence is AAPTAPSAKAP. Residues 218–287 form the Lipoyl-binding 2 domain; the sequence is HMQVSAVGEQ…PLGAPLCIIV (70 aa). Over residues 310–321 the composition is skewed to pro residues; it reads QAPPPVPPPVAA. Low complexity predominate over residues 322–333; sequence APPTAQPLAPTP. The 38-residue stretch at 345-382 folds into the Peripheral subunit-binding (PSBD) domain; it reads FVSPLAKKLAAERGIDLTQVKGTGPEGRIIKKDIDSFV. Arg451 contributes to the CoA binding site. An N6-acetyllysine modification is found at Lys456. Lys463 bears the N6-succinyllysine mark. Ser465 contacts CoA. Lys537 carries the post-translational modification N6-succinyllysine. 3 residues coordinate CoA: Ser556, Asn557, and Gly581. Catalysis depends on residues His610 and Asp614.

This sequence belongs to the 2-oxoacid dehydrogenase family. As to quaternary structure, part of the pyruvate dehydrogenase complex (PDHc) that is a multi-enzyme complex composed of multiple copies of three enzymes, pyruvate dehydrogenase (subunits PDH1A and PDHB, E1 component), dihydrolipoamide acetyltransferase (DLAT, E2 component), and dihydrolipoamide dehydrogenase (DLD, E3 component) to which is added an additional protein the E3-binding protein (PDHX, E3BP). In terms of structural architecture, the E2 and E3BP components assemble into a 60meric central core with icosahedral symmetry. The central core is decorated with E1 and E3 proteins. Currently, two alternative models for the E2:E3BP stoichiometry are considered as being either 48:12 (E2(48)-E3BP(12)) or 40:20 (E2(40)-E3BP(20)). Interacts with PDK2 and PDK3. Interacts with SIRT4. Interacts with PDHB. (R)-lipoate serves as cofactor. Post-translationally, delipoylated at Lys-131 by SIRT4, delipoylation decreases the PHD complex activity. As to expression, detected at higher levels in cauda epididymal spermatazoa than in caput epididymal spermatazoa (at protein level).

Its subcellular location is the mitochondrion matrix. The enzyme catalyses N(6)-[(R)-dihydrolipoyl]-L-lysyl-[protein] + acetyl-CoA = N(6)-[(R)-S(8)-acetyldihydrolipoyl]-L-lysyl-[protein] + CoA. Functionally, as part of the pyruvate dehydrogenase complex, catalyzes the transfers of an acetyl group to a lipoic acid moiety. The pyruvate dehydrogenase complex, catalyzes the overall conversion of pyruvate to acetyl-CoA and CO(2), and thereby links cytoplasmic glycolysis and the mitochondrial tricarboxylic acid (TCA) cycle. This chain is Dihydrolipoyllysine-residue acetyltransferase component of pyruvate dehydrogenase complex, mitochondrial, found in Mesocricetus auratus (Golden hamster).